A 636-amino-acid chain; its full sequence is Chaperone protein DnaK (636 aa).

Position 198 is a phosphothreonine; by autocatalysis (Thr-198). A compositionally biased stretch (low complexity) spans 602 to 613 (QPAGEEQAGAAA). The tract at residues 602–636 (QPAGEEQAGAAAHEGEAKGEKVVDADFEEVKEDKK) is disordered. Basic and acidic residues predominate over residues 614–625 (HEGEAKGEKVVD). A compositionally biased stretch (acidic residues) spans 626-636 (ADFEEVKEDKK).

This sequence belongs to the heat shock protein 70 family.

Acts as a chaperone. The chain is Chaperone protein DnaK from Geotalea daltonii (strain DSM 22248 / JCM 15807 / FRC-32) (Geobacter daltonii).